A 507-amino-acid polypeptide reads, in one-letter code: Histidine ammonia-lyase (507 aa).

The 5-imidazolinone (Ala-Gly) cross-link spans 140 to 142 (ASG). Ser141 carries the 2,3-didehydroalanine (Ser) modification.

The protein belongs to the PAL/histidase family. Contains an active site 4-methylidene-imidazol-5-one (MIO), which is formed autocatalytically by cyclization and dehydration of residues Ala-Ser-Gly.

The protein resides in the cytoplasm. The enzyme catalyses L-histidine = trans-urocanate + NH4(+). It participates in amino-acid degradation; L-histidine degradation into L-glutamate; N-formimidoyl-L-glutamate from L-histidine: step 1/3. This Yersinia enterocolitica serotype O:8 / biotype 1B (strain NCTC 13174 / 8081) protein is Histidine ammonia-lyase.